A 355-amino-acid polypeptide reads, in one-letter code: uncharacterized protein (355 aa).

The interval 1 to 104 (MGTKGLPLYP…EQAKTVQGGR (104 aa)) is disordered. Lysine 19 is modified (N6-acetyllysine). The segment covering 45–54 (EEGTDLEGDM) has biased composition (acidic residues). Position 175 is a phosphoserine (serine 175). 2 disordered regions span residues 247–310 (PRGS…AAYK) and 325–355 (SITS…GKKP). Tyrosine 293 is modified (phosphotyrosine). Serine 294 bears the Phosphoserine mark. Positions 325 to 334 (SITSLSSRTT) are enriched in polar residues. Residues 336 to 348 (LPAADPFALAPFP) show a composition bias toward low complexity.

This is an uncharacterized protein from Homo sapiens (Human).